A 443-amino-acid polypeptide reads, in one-letter code: ATP-dependent protease ATPase subunit HslU (443 aa).

ATP-binding positions include isoleucine 18, 60–65 (GVGKTE), aspartate 256, glutamate 321, and arginine 393.

This sequence belongs to the ClpX chaperone family. HslU subfamily. As to quaternary structure, a double ring-shaped homohexamer of HslV is capped on each side by a ring-shaped HslU homohexamer. The assembly of the HslU/HslV complex is dependent on binding of ATP.

It localises to the cytoplasm. In terms of biological role, ATPase subunit of a proteasome-like degradation complex; this subunit has chaperone activity. The binding of ATP and its subsequent hydrolysis by HslU are essential for unfolding of protein substrates subsequently hydrolyzed by HslV. HslU recognizes the N-terminal part of its protein substrates and unfolds these before they are guided to HslV for hydrolysis. This is ATP-dependent protease ATPase subunit HslU from Salmonella typhi.